The chain runs to 122 residues: Fluoride-specific ion channel FluC (122 aa).

4 helical membrane passes run 4–24 (LLIA…GTAI), 34–54 (IGTM…MTLL), 66–86 (LALV…EWET), and 95–115 (FWIG…AVWF). Residues glycine 74 and threonine 77 each contribute to the Na(+) site.

The protein belongs to the fluoride channel Fluc/FEX (TC 1.A.43) family.

Its subcellular location is the cell inner membrane. It carries out the reaction fluoride(in) = fluoride(out). Na(+) is not transported, but it plays an essential structural role and its presence is essential for fluoride channel function. In terms of biological role, fluoride-specific ion channel. Important for reducing fluoride concentration in the cell, thus reducing its toxicity. This chain is Fluoride-specific ion channel FluC, found in Solibacter usitatus (strain Ellin6076).